The sequence spans 415 residues: Small ribosomal subunit protein uS5m (415 aa).

The tract at residues 1–31 is disordered; the sequence is MRRSGPELWKTLTSVSKSGQKKGRRNTRQPV. The region spanning 131-197 is the S5 DRBM domain; it reads FETYCLEVKR…GMASRKIFHV (67 aa). A disordered region spans residues 396 to 415; it reads GVEPMPLGIGLSHVVPKKDD.

This sequence belongs to the universal ribosomal protein uS5 family. In terms of assembly, component of the mitochondrial ribosome small subunit (28S) which comprises a 12S rRNA and about 30 distinct proteins.

It localises to the mitochondrion. The polypeptide is Small ribosomal subunit protein uS5m (mrps-5) (Caenorhabditis briggsae).